The sequence spans 93 residues: Alpha-conotoxin RVIIIA (93 aa).

Residues methionine 1–serine 20 form the signal peptide. The propeptide occupies glutamine 21–arginine 46. 4-carboxyglutamate is present on residues glutamate 63 and glutamate 68.

Contains 5 disulfide bonds. Expressed by the venom duct.

The protein localises to the secreted. Alpha-conotoxins act on postsynaptic membranes, they bind to the nicotinic acetylcholine receptors (nAChR) and thus inhibit them. This toxin provokes a nearly complete and slowly reversible inhibition of both the human adult (alpha-1-beta-1-epsilon-delta (CHRNA1-CHRNB1-CHRND-CHRNE)) and human fetal (alpha-1-beta-1-gamma-delta (CHRNA1-CHRNB1-CHRNG-CHRND)) neuromuscular nAChRs. It also reversibly blocks the neuromuscular alpha-7/CHRNA7 nAChR, the alpha-3-beta-2 (CHRNA3-CHRNB2) nAChR, the chimeric alpha-6 or -3/beta-3 or -2 (CHRNA6/CHRNA3-CHRNB2-CHRNB3) nAChR and with a low potency the alpha-4-beta-2 (CHRNA4-CHRNB2) nAChR. In addition, the toxin also inhibits the alpha-9-alpha-10 (CHRNA9-CHRNA10) nAChR with a high potency (IC(50)=187 nM). This Conus radiatus (Rayed cone) protein is Alpha-conotoxin RVIIIA.